Consider the following 206-residue polypeptide: Protein GrpE (206 aa).

Over residues 1-10 (MTDPDLHQND) the composition is skewed to basic and acidic residues. The interval 1-38 (MTDPDLHQNDPENPAQASEPVVSKPYIMPDDPETGSAE) is disordered.

The protein belongs to the GrpE family. As to quaternary structure, homodimer.

It localises to the cytoplasm. Functionally, participates actively in the response to hyperosmotic and heat shock by preventing the aggregation of stress-denatured proteins, in association with DnaK and GrpE. It is the nucleotide exchange factor for DnaK and may function as a thermosensor. Unfolded proteins bind initially to DnaJ; upon interaction with the DnaJ-bound protein, DnaK hydrolyzes its bound ATP, resulting in the formation of a stable complex. GrpE releases ADP from DnaK; ATP binding to DnaK triggers the release of the substrate protein, thus completing the reaction cycle. Several rounds of ATP-dependent interactions between DnaJ, DnaK and GrpE are required for fully efficient folding. In Bradyrhizobium sp. (strain ORS 278), this protein is Protein GrpE.